Here is a 55-residue protein sequence, read N- to C-terminus: Large ribosomal subunit protein bL33 (55 aa).

It belongs to the bacterial ribosomal protein bL33 family.

The chain is Large ribosomal subunit protein bL33 from Chelativorans sp. (strain BNC1).